The following is a 288-amino-acid chain: 4-diphosphocytidyl-2-C-methyl-D-erythritol kinase (288 aa).

The active site involves Lys-10. 99–109 (PMGGGLGGGSS) lines the ATP pocket. Asp-141 is an active-site residue.

This sequence belongs to the GHMP kinase family. IspE subfamily. In terms of assembly, homodimer.

The catalysed reaction is 4-CDP-2-C-methyl-D-erythritol + ATP = 4-CDP-2-C-methyl-D-erythritol 2-phosphate + ADP + H(+). The protein operates within isoprenoid biosynthesis; isopentenyl diphosphate biosynthesis via DXP pathway; isopentenyl diphosphate from 1-deoxy-D-xylulose 5-phosphate: step 3/6. Functionally, catalyzes the phosphorylation of the position 2 hydroxy group of 4-diphosphocytidyl-2C-methyl-D-erythritol. This chain is 4-diphosphocytidyl-2-C-methyl-D-erythritol kinase, found in Serratia proteamaculans (strain 568).